Here is a 2371-residue protein sequence, read N- to C-terminus: Reducing polyketide synthase DEP5 (2371 aa).

Residues 47-477 enclose the Ketosynthase family 3 (KS3) domain; sequence LEPIAVVGMG…GTNAHTIIES (431 aa). Catalysis depends on for beta-ketoacyl synthase activity residues Cys221, His358, and His399. Residues 593–905 are malonyl-CoA:ACP transacylase (MAT) domain; the sequence is VFTGQGAQWA…QYLPTLIRGS (313 aa). Ser685 acts as the For malonyltransferase activity in catalysis. The interval 982–1120 is N-terminal hotdog fold; it reads HDVLGQLTIG…GSIRINTSNK (139 aa). Residues 982-1158 form a dehydratase (DH) domain region; the sequence is HDVLGQLTIG…FNYGPTFQDM (177 aa). The PKS/mFAS DH domain occupies 982–1286; the sequence is HDVLGQLTIG…CTAYEAAIPQ (305 aa). His1014 (proton acceptor; for dehydratase activity) is an active-site residue. Residues 1132–1286 form a C-terminal hotdog fold region; the sequence is PQRASGKLWN…CTAYEAAIPQ (155 aa). The active-site Proton donor; for dehydratase activity is the Asp1195. An enoyl reductase (ER) domain region spans residues 1656–1964; the sequence is GKVEAGKVVF…QSLSSTETVL (309 aa). The ketoreductase (KR) domain stretch occupies residues 1988–2163; it reads ATYLLVGCLG…KHACAVVLPM (176 aa). The Carrier domain maps to 2286–2364; sequence SLVRDHFISK…KFAELVCAAQ (79 aa). An O-(pantetheine 4'-phosphoryl)serine modification is found at Ser2323.

The protein operates within polyketide biosynthesis. Functionally, part of the gene cluster that mediates the biosynthesis of depudecin, a highly oxidized eleven-carbon linear polyketide that acts as a histone deacetylase (HDAC) inhibitor and makes a small contribution to pathogenesis. The reducing polyketide synthase DEP5 is the central enzyme in depudecin biosynthesis by yielding the backbone polyketide chain. The monooxygenases DEP2 and DEP4, as well as the uncharacterized protein DEP1, then act as tailoring enzymes to modify the intermediate polyketide chain into depudecin. The protein is Reducing polyketide synthase DEP5 of Fusarium langsethiae.